The primary structure comprises 643 residues: Mediator of RNA polymerase II transcription subunit 17 (643 aa).

A disordered region spans residues 53–82 (SDSEEDGAERARAGREQWKQEPEEDEGQLK). Basic and acidic residues predominate over residues 60–73 (AERARAGREQWKQE).

The protein belongs to the Mediator complex subunit 17 family. As to quaternary structure, component of the Mediator complex.

Its subcellular location is the nucleus. Its function is as follows. Component of the Mediator complex, a coactivator involved in the regulated transcription of nearly all RNA polymerase II-dependent genes. Mediator functions as a bridge to convey information from gene-specific regulatory proteins to the basal RNA polymerase II transcription machinery. Mediator is recruited to promoters by direct interactions with regulatory proteins and serves as a scaffold for the assembly of a functional preinitiation complex with RNA polymerase II and the general transcription factors. The chain is Mediator of RNA polymerase II transcription subunit 17 (med17) from Danio rerio (Zebrafish).